Consider the following 171-residue polypeptide: 3-hydroxydecanoyl-[acyl-carrier-protein] dehydratase (171 aa).

His70 is an active-site residue.

This sequence belongs to the thioester dehydratase family. FabA subfamily. Homodimer.

It localises to the cytoplasm. It carries out the reaction a (3R)-hydroxyacyl-[ACP] = a (2E)-enoyl-[ACP] + H2O. The catalysed reaction is (3R)-hydroxydecanoyl-[ACP] = (2E)-decenoyl-[ACP] + H2O. The enzyme catalyses (2E)-decenoyl-[ACP] = (3Z)-decenoyl-[ACP]. The protein operates within lipid metabolism; fatty acid biosynthesis. Necessary for the introduction of cis unsaturation into fatty acids. Catalyzes the dehydration of (3R)-3-hydroxydecanoyl-ACP to E-(2)-decenoyl-ACP and then its isomerization to Z-(3)-decenoyl-ACP. Can catalyze the dehydratase reaction for beta-hydroxyacyl-ACPs with saturated chain lengths up to 16:0, being most active on intermediate chain length. In Shewanella woodyi (strain ATCC 51908 / MS32), this protein is 3-hydroxydecanoyl-[acyl-carrier-protein] dehydratase.